Here is an 85-residue protein sequence, read N- to C-terminus: Neurtoxin 10 (85 aa).

A signal peptide spans methionine 1 to glycine 23. One can recognise an LCN-type CS-alpha/beta domain in the interval tyrosine 24 to cysteine 85. 3 cysteine pairs are disulfide-bonded: cysteine 38–cysteine 60, cysteine 46–cysteine 65, and cysteine 50–cysteine 67.

The protein belongs to the long (3 C-C) scorpion toxin superfamily. In terms of tissue distribution, expressed by the venom gland.

It is found in the secreted. This is Neurtoxin 10 from Lychas mucronatus (Chinese swimming scorpion).